Here is a 358-residue protein sequence, read N- to C-terminus: uncharacterized protein (358 aa).

It belongs to the methyltransferase superfamily.

This is an uncharacterized protein from Mycobacterium tuberculosis (strain CDC 1551 / Oshkosh).